Here is a 310-residue protein sequence, read N- to C-terminus: Carbamate kinase (310 aa).

It belongs to the carbamate kinase family.

Its subcellular location is the cytoplasm. It catalyses the reaction hydrogencarbonate + NH4(+) + ATP = carbamoyl phosphate + ADP + H2O + H(+). It functions in the pathway metabolic intermediate metabolism; carbamoyl phosphate degradation; CO(2) and NH(3) from carbamoyl phosphate: step 1/1. The polypeptide is Carbamate kinase (arcC) (Staphylococcus epidermidis (strain ATCC 35984 / DSM 28319 / BCRC 17069 / CCUG 31568 / BM 3577 / RP62A)).